An 88-amino-acid chain; its full sequence is Large ribosomal subunit protein eL37A (88 aa).

Positions 19, 22, 34, and 37 each coordinate Zn(2+). The C4-type zinc finger occupies 19-37 (CNRCGRRSFHVQKKTCSSC).

It belongs to the eukaryotic ribosomal protein eL37 family. In terms of assembly, component of the large ribosomal subunit (LSU). Mature yeast ribosomes consist of a small (40S) and a large (60S) subunit. The 40S small subunit contains 1 molecule of ribosomal RNA (18S rRNA) and 33 different proteins (encoded by 57 genes). The large 60S subunit contains 3 rRNA molecules (25S, 5.8S and 5S rRNA) and 46 different proteins (encoded by 81 genes). The cofactor is Zn(2+).

The protein resides in the cytoplasm. Functionally, component of the ribosome, a large ribonucleoprotein complex responsible for the synthesis of proteins in the cell. The small ribosomal subunit (SSU) binds messenger RNAs (mRNAs) and translates the encoded message by selecting cognate aminoacyl-transfer RNA (tRNA) molecules. The large subunit (LSU) contains the ribosomal catalytic site termed the peptidyl transferase center (PTC), which catalyzes the formation of peptide bonds, thereby polymerizing the amino acids delivered by tRNAs into a polypeptide chain. The nascent polypeptides leave the ribosome through a tunnel in the LSU and interact with protein factors that function in enzymatic processing, targeting, and the membrane insertion of nascent chains at the exit of the ribosomal tunnel. This is Large ribosomal subunit protein eL37A from Saccharomyces cerevisiae (strain ATCC 204508 / S288c) (Baker's yeast).